Consider the following 308-residue polypeptide: Aspartate carbamoyltransferase catalytic subunit (308 aa).

2 residues coordinate carbamoyl phosphate: Arg-51 and Thr-52. Lys-79 is a binding site for L-aspartate. Carbamoyl phosphate contacts are provided by Arg-101, His-130, and Gln-133. L-aspartate contacts are provided by Arg-163 and Arg-215. 2 residues coordinate carbamoyl phosphate: Ala-258 and Pro-259.

It belongs to the aspartate/ornithine carbamoyltransferase superfamily. ATCase family. In terms of assembly, heterododecamer (2C3:3R2) of six catalytic PyrB chains organized as two trimers (C3), and six regulatory PyrI chains organized as three dimers (R2).

It catalyses the reaction carbamoyl phosphate + L-aspartate = N-carbamoyl-L-aspartate + phosphate + H(+). It participates in pyrimidine metabolism; UMP biosynthesis via de novo pathway; (S)-dihydroorotate from bicarbonate: step 2/3. In terms of biological role, catalyzes the condensation of carbamoyl phosphate and aspartate to form carbamoyl aspartate and inorganic phosphate, the committed step in the de novo pyrimidine nucleotide biosynthesis pathway. The polypeptide is Aspartate carbamoyltransferase catalytic subunit (Pediococcus pentosaceus (strain ATCC 25745 / CCUG 21536 / LMG 10740 / 183-1w)).